The sequence spans 122 residues: MKPFHTALSFLILTTALGIWAQITHATETKEVQSSLKAQQGLEIEMFHMGFQDSSDCCLSYNSRIQCSRFIGYFPTSGGCTRPGIIFISKRGFQVCANPSDRRVQRCIERLEQNSQPRTYKQ.

The first 21 residues, 1 to 21 (MKPFHTALSFLILTTALGIWA), serve as a signal peptide directing secretion. Disulfide bonds link Cys57/Cys80, Cys58/Cys96, and Cys67/Cys107.

This sequence belongs to the intercrine beta (chemokine CC) family. Post-translationally, the N-terminal is proteolytically cleaved by proteases associated with inflammatory responses. The processed forms CCL9(29-101), CCL9(30-101) and CCL9(31-101) exhibit increase in CCR1-mediated signaling and chemotaxis assays in vitro. In terms of tissue distribution, expressed mainly in the liver, lung, and the thymus, although some expression has been detected in a wide variety of tissues except brain.

The protein resides in the secreted. Functionally, monokine with inflammatory, pyrogenic and chemokinetic properties. Circulates at high concentrations in the blood of healthy animals. Binding to a high-affinity receptor activates calcium release in neutrophils. It also inhibits colony formation of bone marrow myeloid immature progenitors. This is C-C motif chemokine 9 (Ccl9) from Mus musculus (Mouse).